Here is a 146-residue protein sequence, read N- to C-terminus: Large ribosomal subunit protein uL15 (146 aa).

Residues 1–13 (MKLHELKAAEGSR) are compositionally biased toward basic and acidic residues. The interval 1-56 (MKLHELKAAEGSRRVRNRVGRGAGSGNGKTSGRGQKGQKARSGGGVRPGFEGGQLP) is disordered. Composition is skewed to gly residues over residues 21-35 (RGAG…GRGQ) and 42-52 (SGGGVRPGFEG).

The protein belongs to the universal ribosomal protein uL15 family. As to quaternary structure, part of the 50S ribosomal subunit.

Functionally, binds to the 23S rRNA. In Staphylococcus haemolyticus (strain JCSC1435), this protein is Large ribosomal subunit protein uL15.